The sequence spans 61 residues: Small ribosomal subunit protein uS14 (61 aa).

Zn(2+)-binding residues include C24, C27, C40, and C43.

Belongs to the universal ribosomal protein uS14 family. Zinc-binding uS14 subfamily. As to quaternary structure, part of the 30S ribosomal subunit. Contacts proteins S3 and S10. It depends on Zn(2+) as a cofactor.

Functionally, binds 16S rRNA, required for the assembly of 30S particles and may also be responsible for determining the conformation of the 16S rRNA at the A site. The sequence is that of Small ribosomal subunit protein uS14 from Lachnospira eligens (strain ATCC 27750 / DSM 3376 / VPI C15-48 / C15-B4) (Eubacterium eligens).